Consider the following 732-residue polypeptide: Polyribonucleotide nucleotidyltransferase (732 aa).

Asp483 and Asp489 together coordinate Mg(2+). The KH domain occupies 550 to 609 (PRIVTVQIPVDKIGELIGPKGKNIRGIQDETGAELSVEDDGTVTIAAVGGDSMERAKQMV). One can recognise an S1 motif domain in the interval 619–687 (GETYEGTVKT…ERGRLRLSMK (69 aa)). The interval 684-732 (LSMKALLPKPEGMPDEPPQSERPRRDDGERSGGDRGGRGGRNGGGRDRR) is disordered. Over residues 702 to 720 (QSERPRRDDGERSGGDRGG) the composition is skewed to basic and acidic residues.

The protein belongs to the polyribonucleotide nucleotidyltransferase family. The cofactor is Mg(2+).

Its subcellular location is the cytoplasm. The enzyme catalyses RNA(n+1) + phosphate = RNA(n) + a ribonucleoside 5'-diphosphate. Functionally, involved in mRNA degradation. Catalyzes the phosphorolysis of single-stranded polyribonucleotides processively in the 3'- to 5'-direction. The sequence is that of Polyribonucleotide nucleotidyltransferase from Gemmatimonas aurantiaca (strain DSM 14586 / JCM 11422 / NBRC 100505 / T-27).